Reading from the N-terminus, the 132-residue chain is Sec-independent protein translocase protein TatB (132 aa).

A helical transmembrane segment spans residues 2-22 (FDGIGFMELLLIGILGLVVLG). The tract at residues 68-132 (ENQGLKDLSP…VSANPDKSNR (65 aa)) is disordered. Residues 102–122 (TPSASSSAPSESTPSEAPTAE) show a composition bias toward low complexity.

Belongs to the TatB family. In terms of assembly, the Tat system comprises two distinct complexes: a TatABC complex, containing multiple copies of TatA, TatB and TatC subunits, and a separate TatA complex, containing only TatA subunits. Substrates initially bind to the TatABC complex, which probably triggers association of the separate TatA complex to form the active translocon.

It is found in the cell inner membrane. Functionally, part of the twin-arginine translocation (Tat) system that transports large folded proteins containing a characteristic twin-arginine motif in their signal peptide across membranes. Together with TatC, TatB is part of a receptor directly interacting with Tat signal peptides. TatB may form an oligomeric binding site that transiently accommodates folded Tat precursor proteins before their translocation. This chain is Sec-independent protein translocase protein TatB, found in Shewanella woodyi (strain ATCC 51908 / MS32).